The primary structure comprises 253 residues: uncharacterized protein (253 aa).

10–34 serves as a coordination point for NADP(+); that stretch reads LVTGASSGLGRGLALWLARRGVRVF. Residue S142 participates in substrate binding. Y155 (proton acceptor) is an active-site residue.

This sequence belongs to the short-chain dehydrogenases/reductases (SDR) family.

This is an uncharacterized protein from Myxococcus xanthus (strain DK1622).